Here is a 165-residue protein sequence, read N- to C-terminus: MTKPPEQDDSNNRIVAVTLDEESIGRSGPDIEHERAIAIYDLIEQNLFAPEGADGKGPFTLHIGITGNRLMFDIRREDGAPVVVHLLSLGPFRGIVKDYFMICDSYYQAIRTATPDKIEAIDMGRRGIHDEGSRTLQERLKGKVRVDFETSRRLFTLITVLHWKG.

Belongs to the UPF0262 family.

The polypeptide is UPF0262 protein blr1257 (Bradyrhizobium diazoefficiens (strain JCM 10833 / BCRC 13528 / IAM 13628 / NBRC 14792 / USDA 110)).